We begin with the raw amino-acid sequence, 391 residues long: Imidazolonepropionase (391 aa).

Residues histidine 72 and histidine 74 each contribute to the Fe(3+) site. The Zn(2+) site is built by histidine 72 and histidine 74. The 4-imidazolone-5-propanoate site is built by arginine 81, tyrosine 139, and histidine 166. An N-formimidoyl-L-glutamate-binding site is contributed by tyrosine 139. Histidine 229 lines the Fe(3+) pocket. Histidine 229 is a Zn(2+) binding site. Glutamine 232 provides a ligand contact to 4-imidazolone-5-propanoate. Position 303 (aspartate 303) interacts with Fe(3+). Aspartate 303 lines the Zn(2+) pocket. 2 residues coordinate N-formimidoyl-L-glutamate: asparagine 305 and glycine 307. 4-imidazolone-5-propanoate is bound at residue serine 308.

It belongs to the metallo-dependent hydrolases superfamily. HutI family. Requires Zn(2+) as cofactor. Fe(3+) serves as cofactor.

It is found in the cytoplasm. The enzyme catalyses 4-imidazolone-5-propanoate + H2O = N-formimidoyl-L-glutamate. Its pathway is amino-acid degradation; L-histidine degradation into L-glutamate; N-formimidoyl-L-glutamate from L-histidine: step 3/3. Functionally, catalyzes the hydrolytic cleavage of the carbon-nitrogen bond in imidazolone-5-propanoate to yield N-formimidoyl-L-glutamate. It is the third step in the universal histidine degradation pathway. The protein is Imidazolonepropionase of Streptomyces coelicolor (strain ATCC BAA-471 / A3(2) / M145).